Here is a 355-residue protein sequence, read N- to C-terminus: Cyclic nucleotide-gated potassium channel RHE_CH03180 (355 aa).

Residues Met-1–Pro-12 are Cytoplasmic-facing. The chain crosses the membrane as a helical span at residues Leu-13–Thr-30. Over Gln-31–Arg-38 the chain is Periplasmic. The chain crosses the membrane as a helical span at residues Leu-39 to Leu-61. Residues Ser-62–Ala-73 lie on the Cytoplasmic side of the membrane. The helical transmembrane segment at Leu-74–Ser-93 threads the bilayer. Residues Arg-94–Ser-111 traverse the membrane as a helical segment. At Thr-112 to Leu-128 the chain is on the cytoplasmic side. The chain crosses the membrane as a helical span at residues Leu-129 to Ile-149. Residues Glu-150–Ser-160 are Periplasmic-facing. The segment at residues Ile-161–Asp-179 is an intramembrane region (pore-forming). The short motif at Thr-174–Asp-179 is the Selectivity filter element. Topologically, residues Glu-180–Ser-184 are periplasmic. Residues Leu-185 to Leu-209 traverse the membrane as a helical segment. Topologically, residues Ala-210–Glu-355 are cytoplasmic. 3',5'-cyclic AMP contacts are provided by residues Gly-297–Glu-298, Arg-307–Ser-308, and Arg-348.

It belongs to the potassium channel family. Homotetramer.

The protein resides in the cell membrane. Cyclic nucleotide-regulated potassium channel activated by cAMP. The chain is Cyclic nucleotide-gated potassium channel RHE_CH03180 from Rhizobium etli (strain ATCC 51251 / DSM 11541 / JCM 21823 / NBRC 15573 / CFN 42).